Reading from the N-terminus, the 174-residue chain is Protein FanG (174 aa).

Residues 1–21 form the signal peptide; it reads MKKLYKAITVICILMSNLQSA. An intrachain disulfide couples Cys-41 to Cys-75.

It is found in the fimbrium. Involved in the biosynthesis of K99 fimbriae. This chain is Protein FanG (fanG), found in Escherichia coli.